A 160-amino-acid chain; its full sequence is Ribosomal RNA large subunit methyltransferase H (160 aa).

S-adenosyl-L-methionine-binding positions include L78, G109, and 128-133 (LSNLTL).

It belongs to the RNA methyltransferase RlmH family. In terms of assembly, homodimer.

The protein localises to the cytoplasm. It carries out the reaction pseudouridine(1915) in 23S rRNA + S-adenosyl-L-methionine = N(3)-methylpseudouridine(1915) in 23S rRNA + S-adenosyl-L-homocysteine + H(+). In terms of biological role, specifically methylates the pseudouridine at position 1915 (m3Psi1915) in 23S rRNA. This is Ribosomal RNA large subunit methyltransferase H from Alcanivorax borkumensis (strain ATCC 700651 / DSM 11573 / NCIMB 13689 / SK2).